A 174-amino-acid chain; its full sequence is Large ribosomal subunit protein uL10 (174 aa).

The protein belongs to the universal ribosomal protein uL10 family. In terms of assembly, part of the ribosomal stalk of the 50S ribosomal subunit. The N-terminus interacts with L11 and the large rRNA to form the base of the stalk. The C-terminus forms an elongated spine to which L12 dimers bind in a sequential fashion forming a multimeric L10(L12)X complex.

Functionally, forms part of the ribosomal stalk, playing a central role in the interaction of the ribosome with GTP-bound translation factors. This is Large ribosomal subunit protein uL10 from Anaeromyxobacter sp. (strain K).